The primary structure comprises 247 residues: Coproheme decarboxylase (247 aa).

Residues Arg129, 143-147 (YPMDK), His170, Gln183, and Ser221 each bind Fe-coproporphyrin III. Residue Tyr143 is part of the active site.

The protein belongs to the ChdC family. Type 1 subfamily. Fe-coproporphyrin III is required as a cofactor.

The enzyme catalyses Fe-coproporphyrin III + 2 H2O2 + 2 H(+) = heme b + 2 CO2 + 4 H2O. It carries out the reaction Fe-coproporphyrin III + H2O2 + H(+) = harderoheme III + CO2 + 2 H2O. The catalysed reaction is harderoheme III + H2O2 + H(+) = heme b + CO2 + 2 H2O. It functions in the pathway porphyrin-containing compound metabolism; protoheme biosynthesis. In terms of biological role, involved in coproporphyrin-dependent heme b biosynthesis. Catalyzes the decarboxylation of Fe-coproporphyrin III (coproheme) to heme b (protoheme IX), the last step of the pathway. The reaction occurs in a stepwise manner with a three-propionate intermediate. The polypeptide is Coproheme decarboxylase (Bacillus mycoides (strain KBAB4) (Bacillus weihenstephanensis)).